A 209-amino-acid chain; its full sequence is Kynurenine formamidase (209 aa).

Trp-20 serves as a coordination point for substrate. Zn(2+) is bound by residues His-50, His-54, and Asp-56. His-60 acts as the Proton donor/acceptor in catalysis. Residues His-161 and Glu-173 each coordinate Zn(2+).

It belongs to the Cyclase 1 superfamily. KynB family. As to quaternary structure, homodimer. Requires Zn(2+) as cofactor.

The enzyme catalyses N-formyl-L-kynurenine + H2O = L-kynurenine + formate + H(+). It functions in the pathway amino-acid degradation; L-tryptophan degradation via kynurenine pathway; L-kynurenine from L-tryptophan: step 2/2. Functionally, catalyzes the hydrolysis of N-formyl-L-kynurenine to L-kynurenine, the second step in the kynurenine pathway of tryptophan degradation. The sequence is that of Kynurenine formamidase from Bacillus cytotoxicus (strain DSM 22905 / CIP 110041 / 391-98 / NVH 391-98).